The primary structure comprises 283 residues: Ribosome biogenesis GTPase A (283 aa).

One can recognise a CP-type G domain in the interval 14 to 178 (RREVTEKLKL…LLDTPGILWP (165 aa)). GTP-binding positions include 58 to 61 (NKAD), 86 to 87 (NS), 130 to 135 (NVGKST), and Gly174.

The protein belongs to the TRAFAC class YlqF/YawG GTPase family. MTG1 subfamily. Interacts with ctc. Interacts with the immature 50S ribosome subunit. 2 molecules of rbgA bind to one 50S subunit.

The protein localises to the cytoplasm. Functionally, essential protein that is required for a late step of 50S ribosomal subunit assembly. Has GTPase activity that is stimulated by interaction with the immature 50S ribosome subunit. Binds to the 23S rRNA. Required for the association of ribosomal proteins rplP and rpmA with the large subunit. This is Ribosome biogenesis GTPase A from Bacillus licheniformis (strain ATCC 14580 / DSM 13 / JCM 2505 / CCUG 7422 / NBRC 12200 / NCIMB 9375 / NCTC 10341 / NRRL NRS-1264 / Gibson 46).